Here is an 893-residue protein sequence, read N- to C-terminus: Iron-regulated surface determinant protein H (893 aa).

The N-terminal stretch at methionine 1–alanine 40 is a signal peptide. The segment covering glutamate 42 to lysine 81 has biased composition (polar residues). 2 disordered regions span residues glutamate 42–proline 84 and aspartate 226–proline 324. Residues aspartate 105–serine 232 form the NEAT 1 domain. The segment covering alanine 239 to glutamine 270 has biased composition (low complexity). Composition is skewed to polar residues over residues proline 271 to alanine 281 and asparagine 288 to tyrosine 323. NEAT domains follow at residues threonine 345 to aspartate 471 and glutamine 543 to aspartate 660. Disordered stretches follow at residues lysine 658–proline 696, valine 713–aspartate 733, lysine 754–lysine 778, and threonine 837–threonine 865. The segment covering serine 663 to glutamate 678 has biased composition (polar residues). Residues aspartate 679 to asparagine 690 show a composition bias toward low complexity. Residues valine 713–serine 732 are compositionally biased toward basic and acidic residues. The span at threonine 837–lysine 852 shows a compositional bias: basic and acidic residues. Residues leucine 853–threonine 865 show a composition bias toward polar residues. The LPXTG sorting signal signature appears at leucine 859–glycine 863. At threonine 862 the chain carries Pentaglycyl murein peptidoglycan amidated threonine. The propeptide at glycine 863–lysine 893 is removed by sortase.

It belongs to the IsdH family.

The protein localises to the secreted. It localises to the cell wall. In terms of biological role, binds human plasma haptoglobin-hemoglobin complexes, haptoglobin and hemoglobin. Binds haptoglobin-hemoglobin complexes with significantly higher affinity than haptoglobin alone. The chain is Iron-regulated surface determinant protein H (isdH) from Staphylococcus aureus (strain bovine RF122 / ET3-1).